Reading from the N-terminus, the 411-residue chain is Histidine--tRNA ligase (411 aa).

This sequence belongs to the class-II aminoacyl-tRNA synthetase family. Homodimer.

It localises to the cytoplasm. It carries out the reaction tRNA(His) + L-histidine + ATP = L-histidyl-tRNA(His) + AMP + diphosphate + H(+). The protein is Histidine--tRNA ligase of Dictyoglomus turgidum (strain DSM 6724 / Z-1310).